Reading from the N-terminus, the 208-residue chain is Small ribosomal subunit protein uS4 (208 aa).

Positions 95–157 (RRIDNVVYRA…DSLKKLIRSN (63 aa)) constitute an S4 RNA-binding domain.

Belongs to the universal ribosomal protein uS4 family. As to quaternary structure, part of the 30S ribosomal subunit. Contacts protein S5. The interaction surface between S4 and S5 is involved in control of translational fidelity.

One of the primary rRNA binding proteins, it binds directly to 16S rRNA where it nucleates assembly of the body of the 30S subunit. Its function is as follows. With S5 and S12 plays an important role in translational accuracy. This is Small ribosomal subunit protein uS4 from Borreliella burgdorferi (strain ATCC 35210 / DSM 4680 / CIP 102532 / B31) (Borrelia burgdorferi).